The chain runs to 69 residues: Toxin Lc b (69 aa).

4 cysteine pairs are disulfide-bonded: C3–C20, C13–C41, C45–C56, and C57–C62.

Belongs to the three-finger toxin family. Long-chain subfamily. Type II alpha-neurotoxin sub-subfamily. In terms of tissue distribution, expressed by the venom gland.

It is found in the secreted. Binds with high affinity to muscular nicotinic acetylcholine receptors (nAChRs), whereas it binds with a low affinity to neuronal alpha-7/CHRNA7 nAChRs. In Laticauda colubrina (Yellow-lipped sea krait), this protein is Toxin Lc b.